The primary structure comprises 287 residues: Mitochondrial glycine transporter B (287 aa).

3 Solcar repeats span residues 7–97, 104–188, and 198–282; these read HPAL…LKQH, PSAG…AKKA, and IAPL…LMAR. 6 helical membrane-spanning segments follow: residues 13–38, 72–98, 110–135, 163–186, 202–228, and 257–275; these read FMCG…TRLQ, GVSP…KQHY, VLLG…TRFE, GLTA…SQAK, VNFG…KTHM, and GAVP…AWTV.

Belongs to the mitochondrial carrier (TC 2.A.29) family. SLC25A38 subfamily. In terms of tissue distribution, at 24 hours post-fertilization, expressed predominantly in posterior blood island, posterior cardinal vein and circulating blood. At 34 hours post-fertilization, becomes restricted to posterior blood island and circulating blood.

Its subcellular location is the mitochondrion inner membrane. It catalyses the reaction glycine(in) = glycine(out). In terms of biological role, mitochondrial glycine transporter that imports glycine into the mitochondrial matrix. Plays an important role in providing glycine for the first enzymatic step in heme biosynthesis, the condensation of glycine with succinyl-CoA to produce 5-aminolevulinate (ALA) in the mitochondrial matrix. Required during erythropoiesis. May play a role as pro-apoptotic protein that induces caspase-dependent apoptosis. This is Mitochondrial glycine transporter B (slc25a38b) from Danio rerio (Zebrafish).